We begin with the raw amino-acid sequence, 196 residues long: GTP cyclohydrolase-2 (196 aa).

49–53 lines the GTP pocket; it reads RIHSE. Zn(2+)-binding residues include cysteine 54, cysteine 65, and cysteine 67. Residues glutamine 70, 92–94, and threonine 114 contribute to the GTP site; that span reads EGR. Aspartate 126 (proton acceptor) is an active-site residue. Residue arginine 128 is the Nucleophile of the active site. GTP-binding residues include threonine 149 and lysine 154.

It belongs to the GTP cyclohydrolase II family. In terms of assembly, homodimer. The cofactor is Zn(2+).

The enzyme catalyses GTP + 4 H2O = 2,5-diamino-6-hydroxy-4-(5-phosphoribosylamino)-pyrimidine + formate + 2 phosphate + 3 H(+). It participates in cofactor biosynthesis; riboflavin biosynthesis; 5-amino-6-(D-ribitylamino)uracil from GTP: step 1/4. Functionally, catalyzes the conversion of GTP to 2,5-diamino-6-ribosylamino-4(3H)-pyrimidinone 5'-phosphate (DARP), formate and pyrophosphate. This chain is GTP cyclohydrolase-2, found in Buchnera aphidicola subsp. Schizaphis graminum (strain Sg).